The following is a 23-amino-acid chain: Coenzyme PQQ synthesis protein A (23 aa).

Positions 15–19 (EVTMY) form a cross-link, pyrroloquinoline quinone (Glu-Tyr).

The protein belongs to the PqqA family.

It functions in the pathway cofactor biosynthesis; pyrroloquinoline quinone biosynthesis. Its function is as follows. Required for coenzyme pyrroloquinoline quinone (PQQ) biosynthesis. PQQ is probably formed by cross-linking a specific glutamate to a specific tyrosine residue and excising these residues from the peptide. In Pseudomonas putida (strain W619), this protein is Coenzyme PQQ synthesis protein A.